The following is a 1234-amino-acid chain: DNA-directed RNA polymerase subunit beta (1234 aa).

The protein belongs to the RNA polymerase beta chain family. As to quaternary structure, the RNAP catalytic core consists of 2 alpha, 1 beta, 1 beta' and 1 omega subunit. When a sigma factor is associated with the core the holoenzyme is formed, which can initiate transcription.

It carries out the reaction RNA(n) + a ribonucleoside 5'-triphosphate = RNA(n+1) + diphosphate. Functionally, DNA-dependent RNA polymerase catalyzes the transcription of DNA into RNA using the four ribonucleoside triphosphates as substrates. The polypeptide is DNA-directed RNA polymerase subunit beta (Clostridium perfringens (strain ATCC 13124 / DSM 756 / JCM 1290 / NCIMB 6125 / NCTC 8237 / Type A)).